Consider the following 165-residue polypeptide: Acireductone dioxygenase (165 aa).

Positions 90, 92, 96, and 134 each coordinate Fe(2+). Residues His-90, His-92, Glu-96, and His-134 each contribute to the Ni(2+) site.

This sequence belongs to the acireductone dioxygenase (ARD) family. Monomer. The cofactor is Fe(2+). Ni(2+) is required as a cofactor.

It carries out the reaction 1,2-dihydroxy-5-(methylsulfanyl)pent-1-en-3-one + O2 = 3-(methylsulfanyl)propanoate + CO + formate + 2 H(+). It catalyses the reaction 1,2-dihydroxy-5-(methylsulfanyl)pent-1-en-3-one + O2 = 4-methylsulfanyl-2-oxobutanoate + formate + 2 H(+). Its pathway is amino-acid biosynthesis; L-methionine biosynthesis via salvage pathway; L-methionine from S-methyl-5-thio-alpha-D-ribose 1-phosphate: step 5/6. Functionally, catalyzes 2 different reactions between oxygen and the acireductone 1,2-dihydroxy-3-keto-5-methylthiopentene (DHK-MTPene) depending upon the metal bound in the active site. Fe-containing acireductone dioxygenase (Fe-ARD) produces formate and 2-keto-4-methylthiobutyrate (KMTB), the alpha-ketoacid precursor of methionine in the methionine recycle pathway. Ni-containing acireductone dioxygenase (Ni-ARD) produces methylthiopropionate, carbon monoxide and formate, and does not lie on the methionine recycle pathway. In Rhodopseudomonas palustris (strain TIE-1), this protein is Acireductone dioxygenase.